Consider the following 151-residue polypeptide: Probable cGMP 3',5'-cyclic phosphodiesterase subunit delta (151 aa).

It belongs to the PDE6D/unc-119 family. In terms of assembly, interacts with Pde6.

The protein localises to the nucleus. The protein resides in the cytoplasm. The polypeptide is Probable cGMP 3',5'-cyclic phosphodiesterase subunit delta (Anopheles gambiae (African malaria mosquito)).